The sequence spans 119 residues: Large ribosomal subunit protein bL20c (119 aa).

The protein belongs to the bacterial ribosomal protein bL20 family.

Its subcellular location is the plastid. It localises to the chloroplast. In terms of biological role, binds directly to 23S ribosomal RNA and is necessary for the in vitro assembly process of the 50S ribosomal subunit. It is not involved in the protein synthesizing functions of that subunit. The chain is Large ribosomal subunit protein bL20c from Oedogonium cardiacum (Filamentous green alga).